Consider the following 6781-residue polypeptide: Replicase polyprotein 1ab (6781 aa).

Positions Ala2 to Gly109 constitute a CoV Nsp1 globular domain. Glu59, Asn95, Glu99, and Glu102 together coordinate ssDNA. The CoV Nsp2 N-terminal domain maps to Ile112 to Gly364. The CoV Nsp2 middle domain maps to Ser383–Thr776. A CoV Nsp2 C-terminal domain is found at Val778–Gly895. Residues Gly896–Asp991 form the Ubiquitin-like 1 domain. The segment at Ile1009–Ala1040 is disordered. One can recognise a Peptidase C16 1 domain in the interval Ser1057–Tyr1296. Catalysis depends on Cys1091, which acts as the For PL1-PRO activity. Residues Cys1162–Cys1193 form a C4-type 1; degenerate zinc finger. Residues His1239 and Asp1252 each act as for PL1-PRO activity in the active site. A Macro domain is found at Lys1297–Thr1465. One can recognise a Ubiquitin-like 2 domain in the interval Asn1630 to Pro1685. Residues Ser1691–Glu1951 form the Peptidase C16 2 domain. The active-site For PL2-PRO activity is Cys1729. The C4-type 2; degenerate zinc-finger motif lies at Asp1808–His1838. Catalysis depends on for PL2-PRO activity residues His1888 and Asp1901. Transmembrane regions (helical) follow at residues Phe1959–Phe1979 and Trp2022–Met2042. The segment at Phe1959 to Ile2170 is HD1. Residues Ala2038–Asp2102 form the 3Ecto domain. 2 cysteine pairs are disulfide-bonded: Cys2054/Cys2080 and Cys2072/Cys2077. The next 3 helical transmembrane spans lie at Ile2105–Val2125, Ala2127–Gln2147, and Ile2150–Ile2170. The interval Met2176–Gly2266 is Y1. In terms of domain architecture, CoV Nsp3 Y spans Met2176 to Gly2516. Residues His2180, Cys2185, Cys2190, Cys2193, Cys2226, His2229, Cys2233, and Cys2236 each contribute to the Zn(2+) site. The tract at residues His2180 to Cys2193 is ZF1. Residues Cys2226–Cys2236 are ZF2. The tract at residues Pro2267–Leu2356 is Y2. The tract at residues Pro2267–Gly2516 is coV-Y. The tract at residues Ser2357–Asp2414 is Y3. The tract at residues Val2415–Gly2516 is Y4. Transmembrane regions (helical) follow at residues Phe2528 to Phe2548, Ile2619 to Gly2639, Gly2654 to Tyr2674, Gly2754 to Phe2774, Ile2787 to Phe2807, Met2814 to Val2834, and Leu2863 to Phe2883. The segment at Phe2528 to Phe2883 is HD2. Residues Leu2902–Gln2997 enclose the Nsp4C domain. The Peptidase C30 domain occupies Ala2998 to Gln3299. Catalysis depends on for 3CL-PRO activity residues His3038 and Cys3141. The next 7 membrane-spanning stretches (helical) occupy residues Gly3336 to Leu3356, Leu3361 to Phe3381, Leu3399 to Leu3419, Pro3431 to Ala3451, Ile3454 to Val3474, Tyr3476 to Ile3496, and Met3500 to Phe3520. The segment at Gly3336–Phe3520 is HD3. The RdRp Nsp7 cofactor domain occupies Ser3580–Gln3662. One can recognise a RdRp Nsp8 cofactor domain in the interval Ser3663 to Gln3857. The region spanning Asn3858–Gln3965 is the Nsp9 ssRNA-binding domain. In terms of domain architecture, ExoN/MTase coactivator spans Ala3966–Asp4103. Cys4039, Cys4042, His4048, Cys4055, Cys4081, Cys4084, Cys4092, and Cys4094 together coordinate Zn(2+). Zinc fingers lie at residues Cys4039–Cys4055 and Cys4081–Cys4094. The region spanning Tyr4106–Ile4355 is the NiRAN domain. The 99-residue stretch at Lys4361–Ser4459 folds into the Nsp12 Interface domain. Positions 4390, 4396, 4401, 4405, and 4582 each coordinate Zn(2+). The 568-residue stretch at Arg4460–Gln5027 folds into the Nsp12 RNA-dependent RNA polymerase domain. A rdRp Fingers N-ter region spans residues Ser4462–Asn4676. Residues Thr4677–Pro4715 are rdRp Palm N-ter. In terms of domain architecture, RdRp catalytic spans Pro4707–Gly4869. The interval Lys4716–Gly4774 is rdRp Fingers C-ter. Residues His4737, Cys4740, and Cys4741 each contribute to the Zn(2+) site. The segment at Thr4775 to Gln4910 is rdRp Palm C-ter. Active-site for RNA-directed RNA polymerase activity residues include Ser4854, Asp4855, and Asp4856. Residues His4911 to Gln5027 are rdRp Thumb. The CV ZBD domain maps to Ser5028 to Asp5140. Cys5032, Cys5035, Cys5043, Cys5046, Cys5053, Cys5056, His5060, His5066, Cys5077, Cys5082, Cys5099, and His5102 together coordinate Zn(2+). One can recognise a (+)RNA virus helicase ATP-binding domain in the interval Ser5275–Leu5466. Gly5310–Ser5317 provides a ligand contact to ATP. Residues His5467–Ser5636 form the (+)RNA virus helicase C-terminal domain. An ExoN domain is found at Leu5696 to Val5910. Residues Asp5714, Glu5716, and Glu5815 each act as for exoribonuclease activity in the active site. The Zn(2+) site is built by Cys5831, Cys5833, Cys5849, His5852, His5880, Cys5884, and His5887. Residues His5891 and Asp5896 each act as for exoribonuclease activity in the active site. Cys5902 lines the Zn(2+) pocket. The 222-residue stretch at Tyr5919–Leu6140 folds into the N7-MTase domain. Asp5954–Gly5960 contributes to the S-adenosyl-L-methionine binding site. Residues Cys6031–Thr6045 are gpppA-binding. Residues Cys6069, Cys6086, Cys6097, and His6100 each coordinate Zn(2+). The Nsp15 N-terminal oligomerization domain maps to Gly6142 to Arg6202. The AV-Nsp11N/CoV-Nsp15M domain maps to Lys6203 to Glu6320. Residues Ser6337–Pro6477 enclose the NendoU domain. Catalysis depends on for uridylate-specific endoribonuclease activity residues His6367, His6382, and Lys6423. The 297-residue stretch at Ala6481–Val6777 folds into the Nidovirus-type SAM-dependent 2'-O-MTase domain. Active-site for 2'-O-methyltransferase residues include Lys6525, Asp6609, Lys6649, and Glu6682.

It belongs to the coronaviruses polyprotein 1ab family. Interacts with PL-PRO and nsp6. In terms of assembly, monomer. Homodimer; disulfide-linked. As to quaternary structure, interacts with nsp8 and nsp12 to form the replication-transcription complex (RTC): nsp12, nsp7, two subunits of nsp8, and up to two subunits of nsp13. Eight copies of nsp7 and eight copies of nsp8 assemble to form a heterohexadecamer dsRNA-encircling ring structure. Interacts with nsp7, nsp13 and nsp12 to form the replication-transcription complex (RTC): nsp12, nsp7, two subunits of nsp8, and up to two subunits of nsp13. Eight copies of nsp7 and eight copies of nsp8 assemble to form a heterohexadecamer dsRNA-encircling ring structure. In terms of assembly, homodimer. As to quaternary structure, forms a dodecamer and interacts with nsp14 and nsp16; these interactions enhance nsp14 and nsp16 enzymatic activities. Mn(2+) serves as cofactor. In terms of processing, specific enzymatic cleavages in vivo by its own proteases yield mature proteins. 3CL-PRO and PL-PRO proteinases are autocatalytically processed.

Its subcellular location is the host cytoplasm. The protein resides in the host nucleus. It is found in the host membrane. The protein localises to the host perinuclear region. It localises to the host endoplasmic reticulum. Its subcellular location is the host endoplasmic reticulum-Golgi intermediate compartment. It catalyses the reaction Thiol-dependent hydrolysis of ester, thioester, amide, peptide and isopeptide bonds formed by the C-terminal Gly of ubiquitin (a 76-residue protein attached to proteins as an intracellular targeting signal).. It carries out the reaction a 5'-end diphospho-ribonucleoside in mRNA + GTP + H(+) = a 5'-end (5'-triphosphoguanosine)-ribonucleoside in mRNA + diphosphate. The enzyme catalyses RNA(n) + a ribonucleoside 5'-triphosphate = RNA(n+1) + diphosphate. The catalysed reaction is ATP + H2O = ADP + phosphate + H(+). It catalyses the reaction a 5'-end (5'-triphosphoguanosine)-ribonucleoside in mRNA + S-adenosyl-L-methionine = a 5'-end (N(7)-methyl 5'-triphosphoguanosine)-ribonucleoside in mRNA + S-adenosyl-L-homocysteine. It carries out the reaction uridylyl-uridylyl-ribonucleotide-RNA = a 3'-end uridylyl-2',3'-cyclophospho-uridine-RNA + a 5'-end dephospho-ribonucleoside-RNA. The enzyme catalyses a 5'-end (N(7)-methyl 5'-triphosphoguanosine)-ribonucleoside in mRNA + S-adenosyl-L-methionine = a 5'-end (N(7)-methyl 5'-triphosphoguanosine)-(2'-O-methyl-ribonucleoside) in mRNA + S-adenosyl-L-homocysteine + H(+). With respect to regulation, inhibited by the substrate-analog Cbz-Val-Asn-Ser-Thr-Leu-Gln-CMK. Inhibited by (R)-16. Functionally, multifunctional protein responsible for the transcription of negative stranded RNA, leader RNA, subgenomic mRNAs and progeny virion RNA as well as proteinases responsible for the cleavage of the polyprotein into functional products. Its function is as follows. Plays a role in the inhibition of host interferon and pro-inflammatory cytokines production. Suppresses host RELA/p65 activation by blocking NFKBIA phosphorylation. Targets also the RLR pathway downstream of the IRF3 activation by targeting host CREBBP to proteasomal degradation. Responsible for the cleavages located at the N-terminus of the replicase polyprotein. Participates together with nsp4 in the assembly of virally-induced cytoplasmic double-membrane vesicles necessary for viral replication. Forms a molecular pore spanning the double membrane of the coronavirus replication organelle. In addition, PLP2 possesses a deubiquitinating/deISGylating activity and processes both 'Lys-48'- and 'Lys-63'-linked polyubiquitin chains from cellular substrates. PLP2 also antagonizes innate immune induction of type I interferon by blocking the nuclear translocation of host IRF-3. Participates in the inhibition of the integrated stress response (ISR) in the infected host cell. In terms of biological role, participates in the assembly of virally-induced cytoplasmic double-membrane vesicles necessary for viral replication. Functionally, responsible for the majority of cleavages as it cleaves the C-terminus of replicase polyprotein at 11 sites. Recognizes substrates containing the core sequence [ILMVF]-Q-|-[SGACN]. Also contains an ADP-ribose-1''-phosphate (ADRP)-binding function. Participates in the inhibition of the integrated stress response (ISR) in the infected host cell. Its function is as follows. Plays a role in the initial induction of autophagosomes from host endoplasmic reticulum. Later, limits the expansion of these phagosomes that are no longer able to deliver viral components to lysosomes. Plays a role in viral RNA synthesis. Forms a hexadecamer with nsp8 (8 subunits of each) that may participate in viral replication by acting as a primase. Alternatively, may synthesize substantially longer products than oligonucleotide primers. In terms of biological role, plays a role in viral RNA synthesis. Forms a hexadecamer with nsp7 (8 subunits of each) that may participate in viral replication by acting as a primase. Alternatively, may synthesize substantially longer products than oligonucleotide primers. Functionally, forms a primer, NSP9-pU, which is utilized by the polymerase for the initiation of RNA chains. Interacts with ribosome signal recognition particle RNA (SRP). Together with NSP8, suppress protein integration into the cell membrane, thereby disrupting host immune defenses. Its function is as follows. Plays a pivotal role in viral transcription by stimulating both nsp14 3'-5' exoribonuclease and nsp16 2'-O-methyltransferase activities. Therefore plays an essential role in viral mRNAs cap methylation. RNA-directed RNA polymerase that catalyzes the transcription of viral genomic and subgenomic RNAs. Acts in complex with nsp7 and nsp8 to transcribe both the minus and positive strands of genomic RNA. The kinase-like NiRAN domain of NSP12 attaches one or more nucleotides to the amino terminus of NSP9, forming a covalent RNA-protein intermediate that serves as transcription/replication primer. Subgenomic RNAs (sgRNAs) are formed by discontinuous transcription: The polymerase has the ability to pause at transcription-regulating sequences (TRS) and jump to the leader TRS, resulting in a major deletion. This creates a series of subgenomic RNAs that are replicated, transcribed and translated. In addition, Nsp12 is a subunit of the viral RNA capping enzyme that catalyzes the RNA guanylyltransferase reaction for genomic and sub-genomic RNAs. Subsequently, the NiRAN domain transfers RNA to GDP, and forms the core cap structure GpppA-RNA. In terms of biological role, plays a role in viral RNA synthesis. Multi-functional protein with a zinc-binding domain in N-terminus displaying RNA and DNA duplex-unwinding activities with 5' to 3' polarity. ATPase activity is strongly stimulated by poly(U), poly(dT), poly(C), poly(dA), but not by poly(G). Functionally, plays a role in viral RNA synthesis through two distinct activities. The N7-guanine methyltransferase activity plays a role in the formation of the cap structure GpppA-RNA. The proofreading exoribonuclease reduces the sensitivity of the virus to RNA mutagens during replication. This activity acts on both ssRNA and dsRNA in a 3'-5' direction. Its function is as follows. Plays a role in viral transcription/replication and prevents the simultaneous activation of host cell dsRNA sensors, such as MDA5/IFIH1, OAS, and PKR. Acts by degrading the 5'-polyuridines generated during replication of the poly(A) region of viral genomic and subgenomic RNAs. Catalyzes a two-step reaction in which a 2'3'-cyclic phosphate (2'3'-cP) is first generated by 2'-O transesterification, which is then hydrolyzed to a 3'-phosphate (3'-P). If not degraded, poly(U) RNA would hybridize with poly(A) RNA tails and activate host dsRNA sensors. Decreases the RNA levels and thus the expression of host TBK1 and IRF3, antagonizing the host innate response. This chain is Replicase polyprotein 1ab (rep), found in Sus scrofa (Pig).